The following is a 474-amino-acid chain: MKIIHTAIEFAPVIKAGGLGDALYGLAKALAANHTTEVVIPLYPKLFTLPKEQDLCSIQKLSYFFAGEQEATAFSYFYEGIKVTLFKLDTQPELFENAETIYTSDDAFRFCAFSAAAASYIQKEGANIVHLHDWHTGLVAGLLKQQPCSQLQKIVLTLHNFGYRGYTTREILEASSLNEFYISQYQLFRDPQTCVLLKGALYCSDFVTTVSPTYAKEILEDYSDYEIHDAITARQHHLRGILNGIDTTIWGPETDPNLAKNYTKELFETPSIFFEAKAENKKALYERLGLSLEHSPCVCIISRIAEQKGPHFMKQAILHALENAYTLIIIGTCYGNQLHEEFANLQESLANSPDVRILLTYSDVLARQIFAAADMICIPSMFEPCGLTQMIGMRYGTVPLVRATGGLADTVANGINGFSFFNPHDFYEFRNMLSEAVTTYRTNHDKWQHIVRACLDFSSDLETAANKYLEIYKQ.

Lys-15 serves as a coordination point for ADP-alpha-D-glucose.

Belongs to the glycosyltransferase 1 family. Bacterial/plant glycogen synthase subfamily.

The catalysed reaction is [(1-&gt;4)-alpha-D-glucosyl](n) + ADP-alpha-D-glucose = [(1-&gt;4)-alpha-D-glucosyl](n+1) + ADP + H(+). Its pathway is glycan biosynthesis; glycogen biosynthesis. In terms of biological role, synthesizes alpha-1,4-glucan chains using ADP-glucose. This chain is Glycogen synthase, found in Chlamydia trachomatis serovar D (strain ATCC VR-885 / DSM 19411 / UW-3/Cx).